The primary structure comprises 102 residues: Small ribosomal subunit protein uS10 (102 aa).

This sequence belongs to the universal ribosomal protein uS10 family. As to quaternary structure, part of the 30S ribosomal subunit.

Involved in the binding of tRNA to the ribosomes. The polypeptide is Small ribosomal subunit protein uS10 (Methanocorpusculum labreanum (strain ATCC 43576 / DSM 4855 / Z)).